We begin with the raw amino-acid sequence, 104 residues long: Replication restart protein PriB (104 aa).

The region spanning 1–101 is the SSB domain; the sequence is MTNRLELSGI…LHAEQIELID (101 aa).

The protein belongs to the PriB family. In terms of assembly, homodimer. Interacts with DnaT. Interacts with PriA. Component of the replication restart primosome. Primosome assembly occurs via a 'hand-off' mechanism. PriA binds to replication forks, subsequently PriB then DnaT bind; DnaT then displaces ssDNA to generate the helicase loading substrate.

Its function is as follows. Involved in the restart of stalled replication forks, which reloads the replicative helicase on sites far from the origin of replication; the PriA-PriB pathway is the major replication restart pathway. During primosome assembly it facilitates complex formation between PriA and DnaT on DNA; stabilizes PriA on DNA. Stimulates the DNA unwinding activity of PriA helicase. In terms of biological role, binds single-stranded (ss)DNA at the primosome assembly site (PAS). One study finds it binds 15 nucleotide (nt) ssDNA. Another study finds the minimal ssDNA length for binding to PriB is 25 nt; prefers dT(30) over dA(30). Also binds 22 nt dsDNA. The chain is Replication restart protein PriB from Klebsiella pneumoniae subsp. pneumoniae (strain ATCC 700721 / MGH 78578).